Here is a 224-residue protein sequence, read N- to C-terminus: Protein GrpE (224 aa).

Positions M1–L72 are disordered. The segment covering E10–P19 has biased composition (polar residues). The span at N20 to E67 shows a compositional bias: basic and acidic residues.

The protein belongs to the GrpE family. In terms of assembly, homodimer.

It is found in the cytoplasm. In terms of biological role, participates actively in the response to hyperosmotic and heat shock by preventing the aggregation of stress-denatured proteins, in association with DnaK and GrpE. It is the nucleotide exchange factor for DnaK and may function as a thermosensor. Unfolded proteins bind initially to DnaJ; upon interaction with the DnaJ-bound protein, DnaK hydrolyzes its bound ATP, resulting in the formation of a stable complex. GrpE releases ADP from DnaK; ATP binding to DnaK triggers the release of the substrate protein, thus completing the reaction cycle. Several rounds of ATP-dependent interactions between DnaJ, DnaK and GrpE are required for fully efficient folding. This is Protein GrpE from Parageobacillus thermoglucosidasius (Geobacillus thermoglucosidasius).